The primary structure comprises 542 residues: Propane 2-monooxygenase, hydroxylase component large subunit (542 aa).

The Fe cation site is built by Glu-97, Glu-127, His-130, Glu-192, Glu-226, and His-229.

It belongs to the TmoA/XamoA family. As to quaternary structure, the propane 2-monooxygenase multicomponent enzyme system is composed of an electron transfer component and a monooxygenase component interacting with the effector protein MimD. The electron transfer component is composed of a reductase (MimB), and the monooxygenase component is formed by a large subunit (MimA) and a small subunit (MimC). Requires the presence of the chaperonin-like protein MimG to ensure a productive folding, resulting of a soluble MimA, which leads to the active form of MimABCD. Requires Fe(2+) as cofactor.

The catalysed reaction is propane + NADH + O2 + H(+) = propan-2-ol + NAD(+) + H2O. It carries out the reaction acetone + NADH + O2 + H(+) = hydroxyacetone + NAD(+) + H2O. It catalyses the reaction butan-2-one + NADH + O2 + H(+) = 1-hydroxy-2-butanone + NAD(+) + H2O. The enzyme catalyses phenol + NADH + O2 + H(+) = hydroquinone + NAD(+) + H2O. Functionally, component of the propane 2-monooxygenase multicomponent enzyme system which is involved in the degradation of propane via the O2-dependent hydroxylation of propane. Also involved in the degradation of acetone via the O2-dependent hydroxylation of acetone. Also able to catalyze the oxidation of phenol, methylethylketone (2-butanone), 1-propanol and 2-propanol. The protein is Propane 2-monooxygenase, hydroxylase component large subunit of Mycolicibacterium smegmatis (strain ATCC 700084 / mc(2)155) (Mycobacterium smegmatis).